Reading from the N-terminus, the 321-residue chain is Sideroflexin-3 (321 aa).

Met-1 is subject to N-acetylmethionine. Helical transmembrane passes span 146-164, 174-194, 226-246, and 266-286; these read LGMAYVSATTGAVATALGL, LVGRFVPFAAVAAANCINIPL, FQVVISRICMAIPAMAIPPVI, and LQMGLVGFCLVFATPLCCALF.

It belongs to the sideroflexin family.

The protein resides in the mitochondrion membrane. The enzyme catalyses L-serine(in) = L-serine(out). Functionally, mitochondrial serine transporter that mediates transport of serine into mitochondria, an important step of the one-carbon metabolism pathway. Mitochondrial serine is converted to glycine and formate, which then exits to the cytosol where it is used to generate the charged folates that serve as one-carbon donors. The polypeptide is Sideroflexin-3 (SFXN3) (Bos taurus (Bovine)).